Consider the following 156-residue polypeptide: ATP synthase subunit b (156 aa).

Residues Ile12–Ala32 traverse the membrane as a helical segment.

The protein belongs to the ATPase B chain family. F-type ATPases have 2 components, F(1) - the catalytic core - and F(0) - the membrane proton channel. F(1) has five subunits: alpha(3), beta(3), gamma(1), delta(1), epsilon(1). F(0) has three main subunits: a(1), b(2) and c(10-14). The alpha and beta chains form an alternating ring which encloses part of the gamma chain. F(1) is attached to F(0) by a central stalk formed by the gamma and epsilon chains, while a peripheral stalk is formed by the delta and b chains.

It is found in the cell inner membrane. In terms of biological role, f(1)F(0) ATP synthase produces ATP from ADP in the presence of a proton or sodium gradient. F-type ATPases consist of two structural domains, F(1) containing the extramembraneous catalytic core and F(0) containing the membrane proton channel, linked together by a central stalk and a peripheral stalk. During catalysis, ATP synthesis in the catalytic domain of F(1) is coupled via a rotary mechanism of the central stalk subunits to proton translocation. Functionally, component of the F(0) channel, it forms part of the peripheral stalk, linking F(1) to F(0). This chain is ATP synthase subunit b, found in Marinobacter nauticus (strain ATCC 700491 / DSM 11845 / VT8) (Marinobacter aquaeolei).